We begin with the raw amino-acid sequence, 121 residues long: T cell receptor alpha variable 23/delta variable 6 (121 aa).

A signal peptide spans 1–21 (MDKILGASFLVLWLQLCWVSG). One can recognise an Ig-like domain in the interval 30-121 (QQVKQSPQSL…DSATYFCAAS (92 aa)). A disulfide bridge links Cys51 with Cys118. Asn95 carries N-linked (GlcNAc...) asparagine glycosylation.

As to quaternary structure, alpha-beta TR is a heterodimer composed of an alpha and beta chain; disulfide-linked. The alpha-beta TR is associated with the transmembrane signaling CD3 coreceptor proteins to form the TR-CD3 (TcR or TCR). The assembly of alpha-beta TR heterodimers with CD3 occurs in the endoplasmic reticulum where a single alpha-beta TR heterodimer associates with one CD3D-CD3E heterodimer, one CD3G-CD3E heterodimer and one CD247 homodimer forming a stable octameric structure. CD3D-CD3E and CD3G-CD3E heterodimers preferentially associate with TR alpha and TR beta chains, respectively. The association of the CD247 homodimer is the last step of TcR assembly in the endoplasmic reticulum and is required for transport to the cell surface.

The protein localises to the cell membrane. In terms of biological role, v region of the variable domain of T cell receptor (TR) alpha chain that participates in the antigen recognition. Alpha-beta T cell receptors are antigen specific receptors which are essential to the immune response and are present on the cell surface of T lymphocytes. Recognize peptide-major histocompatibility (MH) (pMH) complexes that are displayed by antigen presenting cells (APC), a prerequisite for efficient T cell adaptive immunity against pathogens. Binding of alpha-beta TR to pMH complex initiates TR-CD3 clustering on the cell surface and intracellular activation of LCK that phosphorylates the ITAM motifs of CD3G, CD3D, CD3E and CD247 enabling the recruitment of ZAP70. In turn ZAP70 phosphorylates LAT, which recruits numerous signaling molecules to form the LAT signalosome. The LAT signalosome propagates signal branching to three major signaling pathways, the calcium, the mitogen-activated protein kinase (MAPK) kinase and the nuclear factor NF-kappa-B (NF-kB) pathways, leading to the mobilization of transcription factors that are critical for gene expression and essential for T cell growth and differentiation. The T cell repertoire is generated in the thymus, by V-(D)-J rearrangement. This repertoire is then shaped by intrathymic selection events to generate a peripheral T cell pool of self-MH restricted, non-autoaggressive T cells. Post-thymic interaction of alpha-beta TR with the pMH complexes shapes TR structural and functional avidity. The chain is T cell receptor alpha variable 23/delta variable 6 from Homo sapiens (Human).